A 633-amino-acid chain; its full sequence is ATP-dependent clpX-like chaperone, mitochondrial (633 aa).

The transit peptide at 1–56 (MSSCGACTCGAAAARLLTTSLTSAQRGISCGRIHVPVLGRLGTLDTQILRRAPLRT) directs the protein to the mitochondrion. The disordered stretch occupies residues 65 to 101 (ASKDGTNKDGSGDGNKKSVTEGSSKKSGSGNSGKGGN). A compositionally biased stretch (basic and acidic residues) spans 69 to 83 (GTNKDGSGDGNKKSV). Residues 84–93 (TEGSSKKSGS) show a composition bias toward low complexity. The ClpX-type ZB domain maps to 93-146 (SGNSGKGGNQLRCPKCGDLCTHVETFVSSTRFVKCEKCHHFFVVLSEADSKKSI). Residues C105, C108, C127, and C130 each coordinate Zn(2+). 294 to 301 (PTGSGKTL) contributes to the ATP binding site. K437 bears the N6-acetyllysine mark. A compositionally biased stretch (basic and acidic residues) spans 598–610 (KEPGYIRAPSKES). The disordered stretch occupies residues 598–633 (KEPGYIRAPSKESSEEDYDSGVEEDGWPRQADAANS). Over residues 611–622 (SEEDYDSGVEED) the composition is skewed to acidic residues. The residue at position 617 (S617) is a Phosphoserine.

It belongs to the ClpX chaperone family. In terms of assembly, homohexamer that forms a ring structure; this hexamerization requires ATP binding. Component of the ClpXP complex formed by the assembly of two CLPP heptameric rings with two CLPX hexameric rings, giving rise to a symmetrical structure with two central CLPP rings flanked by a CLPX ring at either end of the complex. Interacts with TFAM.

It localises to the mitochondrion. Its subcellular location is the mitochondrion matrix. It is found in the mitochondrion nucleoid. The catalysed reaction is ATP + H2O = ADP + phosphate + H(+). In terms of biological role, ATP-dependent chaperone that functions as an unfoldase. As part of the ClpXP protease complex, it recognizes specific protein substrates, unfolds them using energy derived from ATP hydrolysis, and then translocates them to the proteolytic subunit (CLPP) of the ClpXP complex for degradation. Thanks to its chaperone activity, it also functions in the incorporation of the pyridoxal phosphate cofactor into 5-aminolevulinate synthase, thereby activating 5-aminolevulinate (ALA) synthesis, the first step in heme biosynthesis. This chaperone is also involved in the control of mtDNA nucleoid distribution, by regulating mitochondrial transcription factor A (TFAM) activity. The polypeptide is ATP-dependent clpX-like chaperone, mitochondrial (Rattus norvegicus (Rat)).